The primary structure comprises 760 residues: Cyclin-D-binding Myb-like transcription factor 1 (760 aa).

Residues 1-237 are interaction with CCND2; sequence MSTVEEDSDT…TPEEIEKLKE (237 aa). Residues 87–170 are required for transcriptional activation; it reads VTMTATTEVA…IDILMNNIER (84 aa). The tract at residues 87-458 is required for DNA-binding; that stretch reads VTMTATTEVA…DNTAISSSPM (372 aa). An interaction with CCND1, CCND2 and CCND3 region spans residues 176–760; that stretch reads GIKDATEIIF…KDVEDLVNCH (585 aa). Residues 225–263 enclose the Myb-like 1 domain; the sequence is GKYTPEEIEKLKELRIKHGNDWATIGAALGRSASSVKDR. The 66-residue stretch at 268 to 333 folds into the HTH myb-type domain; sequence KDTCNTGKWT…KWLNYLNWKQ (66 aa). The segment at residues 306-329 is a DNA-binding region (H-T-H motif); sequence WAAVAERVGTRSEKQCRSKWLNYL. One can recognise a Myb-like 2 domain in the interval 339-388; it reads WTKEDEINLILRIAELDVADENDINWDLLAEGWSSVRSPQWLRSKWWTIK. 2 disordered regions span residues 414-435 and 738-760; these read KNNP…NTNS and IGSS…VNCH. The segment at 459–760 is required for transcriptional activation; that stretch reads AALQIPVQIT…KDVEDLVNCH (302 aa).

Belongs to the DMTF1 family. Interacts with the D-type cyclins CCND1, CCND2 and CCND3. Interaction with D-type cyclins may modulate transcriptional activation by this protein. Post-translationally, phosphorylated by the cyclin-D2/CDK4, cyclin-D3/CDK4 and cyclin-D2/CDK6 complexes and to a lesser extent by the cyclin-D1/CDK4 complex. As to expression, expressed at relatively low levels in colonic mucosa, ovary, peripheral leukocytes, prostate and small intestine, and at higher levels in spleen, testis and thymus. Expressed in multiple regions of the brain and CNS including amygdala, caudate, corpus callosum, hippocampus, substantia nigra and subthalamic nucleus. Isoform 1 is the predominant isoform in monocytes, macrophages and neutrophils, isoform 2 is most strongly expressed in peripheral blood leukocytes and quiescent CD34 positive cells, and isoform 3 is expressed at low levels in all hematopoietic cell types. Expression is frequently reduced in non-small-cell lung carcinomas (NSCLC) due to hemizygous gene deletion, strongly suggesting that this locus is haploinsufficient for tumor suppression. Loss of this locus frequently occurs in tumors which retain wild-type CDKN2A/ARF and p53/TP53 loci. Hemizygous gene deletion has also been observed in leukemic blasts from patients with abnormalities of the long arm of chromosome 7.

It localises to the nucleus. In terms of biological role, transcriptional activator which activates the CDKN2A/ARF locus in response to Ras-Raf signaling, thereby promoting p53/TP53-dependent growth arrest. Binds to the consensus sequence 5'-CCCG[GT]ATGT-3'. Isoform 1 may cooperate with MYB to activate transcription of the ANPEP gene. Isoform 2 may antagonize transcriptional activation by isoform 1. The protein is Cyclin-D-binding Myb-like transcription factor 1 (DMTF1) of Homo sapiens (Human).